The sequence spans 347 residues: Eukaryotic translation initiation factor 3 subunit I (347 aa).

WD repeat units lie at residues 8-47 (GHER…RLGT), 50-89 (DHSG…AVHS), 150-190 (EQAT…VQAK), 192-233 (IHEK…KTYK), and 289-328 (GHFG…FDFK).

Belongs to the eIF-3 subunit I family. In terms of assembly, component of the eukaryotic translation initiation factor 3 (eIF-3) complex.

It is found in the cytoplasm. Functionally, component of the eukaryotic translation initiation factor 3 (eIF-3) complex, which is involved in protein synthesis of a specialized repertoire of mRNAs and, together with other initiation factors, stimulates binding of mRNA and methionyl-tRNAi to the 40S ribosome. The eIF-3 complex specifically targets and initiates translation of a subset of mRNAs involved in cell proliferation. This Kluyveromyces lactis (strain ATCC 8585 / CBS 2359 / DSM 70799 / NBRC 1267 / NRRL Y-1140 / WM37) (Yeast) protein is Eukaryotic translation initiation factor 3 subunit I.